We begin with the raw amino-acid sequence, 403 residues long: Odorant receptor 43b (403 aa).

Residues 1–49 (MFGHFKLVYPAPISEPIQSRDSNAYMMETLRNSGLNLKNDFGIGRKIWR) are Cytoplasmic-facing. The helical transmembrane segment at 50-70 (VFSFTYNMVILPVSFPINYVI) threads the bilayer. At 71–83 (HLAEFPPELLLQS) the chain is on the extracellular side. A helical transmembrane segment spans residues 84–104 (LQLCLNTWCFALKFFTLIVYT). Residues 105–139 (HRLELANKHFDELDKYCVKPAEKRKVRDMVATITR) are Cytoplasmic-facing. A helical membrane pass occupies residues 140 to 160 (LYLTFVVVYVLYATSTLLDGL). Residues 161–193 (LHHRVPYNTYYPFINWRVDRTQMYIQSFLEYFT) are Extracellular-facing. A helical membrane pass occupies residues 194–214 (VGYAIYVATATDSYPVIYVAA). Residues 215 to 271 (LRTHILLLKDRIIYLGDPSNEGSSDPSYMFKSLVDCIKAHRTMLNFCDAIQPIISGT) are Cytoplasmic-facing. Residues 272-292 (IFAQFIICGSILGIIMINMVL) form a helical membrane-spanning segment. Residues 293 to 299 (FADQSTR) are Extracellular-facing. Residues 300 to 320 (FGIVIYVMAVLLQTFPLCFYC) form a helical membrane-spanning segment. Over 321 to 372 (NAIVDDCKELAHALFHSAWWVQDKRYQRTVIQFLQKLQQPMTFTAMNIFNIN) the chain is Cytoplasmic. Residues 373 to 393 (LATNINVAKFAFTVYAIASGM) traverse the membrane as a helical segment. Over 394–403 (NLDQKLSIKE) the chain is Extracellular.

The protein belongs to the insect chemoreceptor superfamily. Heteromeric odorant receptor channel (TC 1.A.69) family. Or2a subfamily. As to quaternary structure, interacts with Orco. Complexes exist early in the endomembrane system in olfactory sensory neurons (OSNs), coupling these complexes to the conserved ciliary trafficking pathway. As to expression, expressed in 16 olfactory receptor neurons in a broad area across the antenna, including both anterior and posterior faces and in the maxillary palp. This expression pattern matches the distribution of the small sensilla basiconica. Expression in the antenna is observed late in antennal development at 93 hours APF.

The protein resides in the cell membrane. Functionally, odorant receptor which mediates acceptance or avoidance behavior, depending on its substrates. The odorant receptor repertoire encodes a large collection of odor stimuli that vary widely in identity, intensity, and duration. May form a complex with Orco to form odorant-sensing units, providing sensitive and prolonged odorant signaling and calcium permeability. The chain is Odorant receptor 43b (Or43b) from Drosophila melanogaster (Fruit fly).